We begin with the raw amino-acid sequence, 352 residues long: uncharacterized protein (352 aa).

8 helical membrane-spanning segments follow: residues 6-26 (FIFL…IINP), 30-50 (FHIV…IINI), 76-96 (IFLT…FVII), 151-171 (EFII…LPFL), 197-217 (FILV…LPLI), 226-246 (VKVD…IEGL), 291-311 (WLPI…ASFA), and 330-350 (LIGG…AKIF).

It belongs to the CitM (TC 2.A.11) transporter family.

The protein localises to the cell membrane. This is an uncharacterized protein from Methanocaldococcus jannaschii (strain ATCC 43067 / DSM 2661 / JAL-1 / JCM 10045 / NBRC 100440) (Methanococcus jannaschii).